The primary structure comprises 1586 residues: Pentafunctional AROM polypeptide (1586 aa).

Residues 1-384 (MSEPTKISIL…HEPKASVVSN (384 aa)) are 3-dehydroquinate synthase. Residues 44–46 (DTN), 81–84 (ESSK), 114–116 (GGV), and D119 each bind NAD(+). R130 serves as a coordination point for 7-phospho-2-dehydro-3-deoxy-D-arabino-heptonate. 139 to 140 (TT) is a binding site for NAD(+). The 7-phospho-2-dehydro-3-deoxy-D-arabino-heptonate site is built by D146 and K152. Position 161 (K161) interacts with NAD(+). Position 162 (N162) interacts with 7-phospho-2-dehydro-3-deoxy-D-arabino-heptonate. Residues 179–182 (FLET) and N190 each bind NAD(+). Zn(2+) is bound at residue E194. 7-phospho-2-dehydro-3-deoxy-D-arabino-heptonate-binding positions include 194 to 197 (EVIK) and K250. E260 serves as the catalytic Proton acceptor; for 3-dehydroquinate synthase activity. 7-phospho-2-dehydro-3-deoxy-D-arabino-heptonate contacts are provided by residues 264–268 (RNLLN) and H271. Residue H271 participates in Zn(2+) binding. Residue H275 is the Proton acceptor; for 3-dehydroquinate synthase activity of the active site. Positions 287 and 356 each coordinate 7-phospho-2-dehydro-3-deoxy-D-arabino-heptonate. H287 lines the Zn(2+) pocket. Residues 397-842 (VHPGVPKSLN…WDALKQMFSV (446 aa)) are EPSP synthase. C824 (for EPSP synthase activity) is an active-site residue. Positions 864 to 1056 (SASVFIIGMR…KKKKHSFFVS (193 aa)) are shikimate kinase. Position 871 to 878 (871 to 878 (GMRGAGKT)) interacts with ATP. A 3-dehydroquinase region spans residues 1057-1277 (LTLPDVEPSG…AAPGQLSAAE (221 aa)). H1180 (proton acceptor; for 3-dehydroquinate dehydratase activity) is an active-site residue. K1208 functions as the Schiff-base intermediate with substrate; for 3-dehydroquinate dehydratase activity in the catalytic mechanism. A shikimate dehydrogenase region spans residues 1290–1586 (AQKFAIFGSP…SKHLDYFLSF (297 aa)).

The protein in the N-terminal section; belongs to the sugar phosphate cyclases superfamily. Dehydroquinate synthase family. It in the 2nd section; belongs to the EPSP synthase family. This sequence in the 3rd section; belongs to the shikimate kinase family. In the 4th section; belongs to the type-I 3-dehydroquinase family. The protein in the C-terminal section; belongs to the shikimate dehydrogenase family. In terms of assembly, homodimer. Zn(2+) is required as a cofactor.

It is found in the cytoplasm. The catalysed reaction is 7-phospho-2-dehydro-3-deoxy-D-arabino-heptonate = 3-dehydroquinate + phosphate. It catalyses the reaction 3-dehydroquinate = 3-dehydroshikimate + H2O. The enzyme catalyses shikimate + NADP(+) = 3-dehydroshikimate + NADPH + H(+). It carries out the reaction shikimate + ATP = 3-phosphoshikimate + ADP + H(+). The catalysed reaction is 3-phosphoshikimate + phosphoenolpyruvate = 5-O-(1-carboxyvinyl)-3-phosphoshikimate + phosphate. Its pathway is metabolic intermediate biosynthesis; chorismate biosynthesis; chorismate from D-erythrose 4-phosphate and phosphoenolpyruvate: step 2/7. The protein operates within metabolic intermediate biosynthesis; chorismate biosynthesis; chorismate from D-erythrose 4-phosphate and phosphoenolpyruvate: step 3/7. It functions in the pathway metabolic intermediate biosynthesis; chorismate biosynthesis; chorismate from D-erythrose 4-phosphate and phosphoenolpyruvate: step 4/7. It participates in metabolic intermediate biosynthesis; chorismate biosynthesis; chorismate from D-erythrose 4-phosphate and phosphoenolpyruvate: step 5/7. Its pathway is metabolic intermediate biosynthesis; chorismate biosynthesis; chorismate from D-erythrose 4-phosphate and phosphoenolpyruvate: step 6/7. The AROM polypeptide catalyzes 5 consecutive enzymatic reactions in prechorismate polyaromatic amino acid biosynthesis. This Penicillium rubens (strain ATCC 28089 / DSM 1075 / NRRL 1951 / Wisconsin 54-1255) (Penicillium chrysogenum) protein is Pentafunctional AROM polypeptide.